Reading from the N-terminus, the 191-residue chain is Thymidine kinase (191 aa).

Residues 9 to 16 (GSMNSGKT) and 85 to 88 (DESQ) each bind ATP. Glutamate 86 serves as the catalytic Proton acceptor. Zn(2+) is bound by residues cysteine 143, cysteine 146, cysteine 181, and cysteine 184.

The protein belongs to the thymidine kinase family. In terms of assembly, homotetramer.

Its subcellular location is the cytoplasm. It catalyses the reaction thymidine + ATP = dTMP + ADP + H(+). This Listeria monocytogenes serovar 1/2a (strain ATCC BAA-679 / EGD-e) protein is Thymidine kinase.